A 168-amino-acid polypeptide reads, in one-letter code: UPF0303 protein YE1367 (168 aa).

The protein belongs to the UPF0303 family.

This chain is UPF0303 protein YE1367, found in Yersinia enterocolitica serotype O:8 / biotype 1B (strain NCTC 13174 / 8081).